Reading from the N-terminus, the 136-residue chain is Large ribosomal subunit protein uL16 (136 aa).

The protein belongs to the universal ribosomal protein uL16 family. As to quaternary structure, part of the 50S ribosomal subunit.

Binds 23S rRNA and is also seen to make contacts with the A and possibly P site tRNAs. The protein is Large ribosomal subunit protein uL16 of Photobacterium profundum (strain SS9).